Reading from the N-terminus, the 54-residue chain is Ovomucoid (54 aa).

The Kazal-like domain maps to 4 to 54 (VDCSEYPKPACTLEYRPLCGSDSKTYGNKCNFCNAVVESNGTLTLSHFGKC). Cystine bridges form between Cys6–Cys36, Cys14–Cys33, and Cys22–Cys54. A glycan (N-linked (GlcNAc...) asparagine) is linked at Asn43.

The protein localises to the secreted. The sequence is that of Ovomucoid from Alectoris chukar (Chukar partridge).